The sequence spans 609 residues: Kelch domain-containing protein 10 homolog (609 aa).

A disordered region spans residues 103-146; that stretch reads ASDLDEEEEEEDDDVDVDVDYGDTDSESEFEEMYSDEWTSSSDE. The span at 104–137 shows a compositional bias: acidic residues; the sequence is SDLDEEEEEEDDDVDVDVDYGDTDSESEFEEMYS. Kelch repeat units follow at residues 214–277, 279–334, 335–381, 389–437, 458–508, and 510–554; these read HLYS…IHNN, LISH…IHKH, FLYT…RYRH, HIFV…GNRG, EAFI…HSDN, and CMYV…YNDN. The interval 576–609 is disordered; the sequence is LPPQRRRRLDTSQPDPSMLISLYSNPKRARSSTQ.

As to quaternary structure, interacts with Elongin-C; may be the substrate recognition component of an E3 ubiquitin ligase complex.

Its function is as follows. Activates the Pk92B/DASK1-MAPK signaling cascade. This chain is Kelch domain-containing protein 10 homolog (slim), found in Drosophila melanogaster (Fruit fly).